Consider the following 368-residue polypeptide: Protein RecA (368 aa).

72–79 (GNESSGKT) is an ATP binding site.

It belongs to the RecA family.

The protein resides in the cytoplasm. Its function is as follows. Can catalyze the hydrolysis of ATP in the presence of single-stranded DNA, the ATP-dependent uptake of single-stranded DNA by duplex DNA, and the ATP-dependent hybridization of homologous single-stranded DNAs. It interacts with LexA causing its activation and leading to its autocatalytic cleavage. The chain is Protein RecA from Petrotoga mobilis (strain DSM 10674 / SJ95).